The following is a 491-amino-acid chain: Aspartyl/glutamyl-tRNA(Asn/Gln) amidotransferase subunit B (491 aa).

Belongs to the GatB/GatE family. GatB subfamily. Heterotrimer of A, B and C subunits.

It catalyses the reaction L-glutamyl-tRNA(Gln) + L-glutamine + ATP + H2O = L-glutaminyl-tRNA(Gln) + L-glutamate + ADP + phosphate + H(+). The catalysed reaction is L-aspartyl-tRNA(Asn) + L-glutamine + ATP + H2O = L-asparaginyl-tRNA(Asn) + L-glutamate + ADP + phosphate + 2 H(+). Allows the formation of correctly charged Asn-tRNA(Asn) or Gln-tRNA(Gln) through the transamidation of misacylated Asp-tRNA(Asn) or Glu-tRNA(Gln) in organisms which lack either or both of asparaginyl-tRNA or glutaminyl-tRNA synthetases. The reaction takes place in the presence of glutamine and ATP through an activated phospho-Asp-tRNA(Asn) or phospho-Glu-tRNA(Gln). The chain is Aspartyl/glutamyl-tRNA(Asn/Gln) amidotransferase subunit B from Nostoc punctiforme (strain ATCC 29133 / PCC 73102).